A 250-amino-acid chain; its full sequence is Small ribosomal subunit protein uS2 (250 aa).

Belongs to the universal ribosomal protein uS2 family.

The protein is Small ribosomal subunit protein uS2 of Chloroherpeton thalassium (strain ATCC 35110 / GB-78).